We begin with the raw amino-acid sequence, 189 residues long: FAS1 domain-containing protein mug57 (189 aa).

The N-terminal stretch at Met-1 to Ser-24 is a signal peptide. The 146-residue stretch at Glu-37 to Leu-182 folds into the FAS1 domain.

It localises to the cytoplasm. It is found in the nucleus. The protein resides in the membrane. Functionally, has a role in sporulation. This Schizosaccharomyces pombe (strain 972 / ATCC 24843) (Fission yeast) protein is FAS1 domain-containing protein mug57 (mug57).